The following is a 468-amino-acid chain: UDP-N-acetylmuramate--L-alanine ligase (468 aa).

121 to 127 (GSHGKTT) lines the ATP pocket.

The protein belongs to the MurCDEF family.

It is found in the cytoplasm. The enzyme catalyses UDP-N-acetyl-alpha-D-muramate + L-alanine + ATP = UDP-N-acetyl-alpha-D-muramoyl-L-alanine + ADP + phosphate + H(+). The protein operates within cell wall biogenesis; peptidoglycan biosynthesis. Functionally, cell wall formation. This Borrelia garinii subsp. bavariensis (strain ATCC BAA-2496 / DSM 23469 / PBi) (Borreliella bavariensis) protein is UDP-N-acetylmuramate--L-alanine ligase.